The sequence spans 239 residues: Purine nucleoside phosphorylase DeoD-type (239 aa).

Histidine 5 serves as a coordination point for a purine D-ribonucleoside. Residues glycine 21, arginine 25, arginine 44, and 88-91 contribute to the phosphate site; that span reads RVGS. Residues 180-182 and 204-205 each bind a purine D-ribonucleoside; these read EME and SD. The active-site Proton donor is aspartate 205.

Belongs to the PNP/UDP phosphorylase family. In terms of assembly, homohexamer; trimer of homodimers.

It catalyses the reaction a purine D-ribonucleoside + phosphate = a purine nucleobase + alpha-D-ribose 1-phosphate. The enzyme catalyses a purine 2'-deoxy-D-ribonucleoside + phosphate = a purine nucleobase + 2-deoxy-alpha-D-ribose 1-phosphate. Its function is as follows. Catalyzes the reversible phosphorolytic breakdown of the N-glycosidic bond in the beta-(deoxy)ribonucleoside molecules, with the formation of the corresponding free purine bases and pentose-1-phosphate. The sequence is that of Purine nucleoside phosphorylase DeoD-type from Salmonella arizonae (strain ATCC BAA-731 / CDC346-86 / RSK2980).